Consider the following 127-residue polypeptide: Ribonuclease P protein component (127 aa).

This sequence belongs to the RnpA family. In terms of assembly, consists of a catalytic RNA component (M1 or rnpB) and a protein subunit.

The enzyme catalyses Endonucleolytic cleavage of RNA, removing 5'-extranucleotides from tRNA precursor.. In terms of biological role, RNaseP catalyzes the removal of the 5'-leader sequence from pre-tRNA to produce the mature 5'-terminus. It can also cleave other RNA substrates such as 4.5S RNA. The protein component plays an auxiliary but essential role in vivo by binding to the 5'-leader sequence and broadening the substrate specificity of the ribozyme. This is Ribonuclease P protein component from Synechococcus sp. (strain RCC307).